Consider the following 658-residue polypeptide: ATP-dependent RNA helicase DDX3Y (658 aa).

Positions 1-10 (MSHVVVKNDP) are enriched in basic and acidic residues. The tract at residues 1-141 (MSHVVVKNDP…DDWSKPLPPS (141 aa)) is disordered. Position 2 is an N-acetylserine (S2). Positions 15–34 (QLANLDLNSEKQSGGASTAS) are enriched in polar residues. The span at 44–68 (RNREASKGFHDKDSSGWSCSKDKDA) shows a compositional bias: basic and acidic residues. An N6-acetyllysine modification is found at K55. S81, S85, and S89 each carry phosphoserine. The span at 93-128 (GRFDDRGRSDYDGIGNRDRPGFGRFERSGHSRWCDK) shows a compositional bias: basic and acidic residues. Omega-N-methylarginine is present on R100. Position 101 is a phosphoserine (S101). Residue Y103 is modified to Phosphotyrosine. An Omega-N-methylarginine modification is found at R109. Phosphoserine occurs at positions 129 and 181. The Q motif signature appears at 178–206 (ENFSDIDMGEIIMGNIELTRYTRPTPVQK). Residue 198–205 (YTRPTPVQ) participates in ATP binding. The 193-residue stretch at 209 to 401 (IPIIKGKRDL…RDFLDEYIFL (193 aa)) folds into the Helicase ATP-binding domain. K213 is covalently cross-linked (Glycyl lysine isopeptide (Lys-Gly) (interchain with G-Cter in SUMO2)). Residue 222–229 (AQTGSGKT) participates in ATP binding. The DEAD box motif lies at 345–348 (DEAD). Positions 412–573 (NITQKVVWVE…EVPSWLENMA (162 aa)) constitute a Helicase C-terminal domain. The residue at position 454 (S454) is a Phosphoserine. Position 588 is an omega-N-methylarginine (R588). A phosphoserine mark is found at S590 and S601. The interval 597–625 (DYRQSSGSSSSGFGASRGSSSRSGGSGYG) is disordered. The span at 601-619 (SSGSSSSGFGASRGSSSRS) shows a compositional bias: low complexity. An omega-N-methylarginine mark is found at R613 and R628.

It belongs to the DEAD box helicase family. DDX3/DED1 subfamily. In terms of assembly, may interact with TDRD3.

The protein resides in the cytoplasm. The protein localises to the nucleus. It catalyses the reaction ATP + H2O = ADP + phosphate + H(+). Probable ATP-dependent RNA helicase. May play a role in spermatogenesis. This Pongo abelii (Sumatran orangutan) protein is ATP-dependent RNA helicase DDX3Y (DDX3Y).